The following is a 353-amino-acid chain: Histidinol-phosphate aminotransferase (353 aa).

Lysine 218 is modified (N6-(pyridoxal phosphate)lysine).

It belongs to the class-II pyridoxal-phosphate-dependent aminotransferase family. Histidinol-phosphate aminotransferase subfamily. As to quaternary structure, homodimer. The cofactor is pyridoxal 5'-phosphate.

The catalysed reaction is L-histidinol phosphate + 2-oxoglutarate = 3-(imidazol-4-yl)-2-oxopropyl phosphate + L-glutamate. It participates in amino-acid biosynthesis; L-histidine biosynthesis; L-histidine from 5-phospho-alpha-D-ribose 1-diphosphate: step 7/9. The sequence is that of Histidinol-phosphate aminotransferase from Synechococcus sp. (strain JA-3-3Ab) (Cyanobacteria bacterium Yellowstone A-Prime).